Reading from the N-terminus, the 171-residue chain is tRNA-specific adenosine deaminase (171 aa).

One can recognise a CMP/dCMP-type deaminase domain in the interval 6–133 (EEQTYFMQEA…ERLNHRVQVE (128 aa)). Zn(2+) is bound at residue His57. Glu59 (proton donor) is an active-site residue. Residues Cys87 and Cys90 each coordinate Zn(2+).

It belongs to the cytidine and deoxycytidylate deaminase family. As to quaternary structure, homodimer. It depends on Zn(2+) as a cofactor.

The catalysed reaction is adenosine(34) in tRNA + H2O + H(+) = inosine(34) in tRNA + NH4(+). Its function is as follows. Catalyzes the deamination of adenosine to inosine at the wobble position 34 of tRNA(Arg2). The protein is tRNA-specific adenosine deaminase of Streptococcus pyogenes serotype M1.